The chain runs to 262 residues: Probable aminoglycoside 3'-phosphotransferase (262 aa).

Asp187 functions as the Proton acceptor in the catalytic mechanism.

The protein belongs to the aminoglycoside phosphotransferase family.

The catalysed reaction is kanamycin A + ATP = kanamycin 3'-phosphate + ADP + H(+). The protein is Probable aminoglycoside 3'-phosphotransferase (ymdC) of Lactococcus lactis subsp. lactis (strain IL1403) (Streptococcus lactis).